Reading from the N-terminus, the 192-residue chain is Shikimate kinase (192 aa).

Position 15-20 (15-20 (GAGKTT)) interacts with ATP. Thr-19 contacts Mg(2+). Substrate-binding residues include Asp-37, Arg-61, and Gly-83. Residue Arg-121 coordinates ATP. Residue Arg-140 participates in substrate binding.

Belongs to the shikimate kinase family. As to quaternary structure, monomer. It depends on Mg(2+) as a cofactor.

It is found in the cytoplasm. The catalysed reaction is shikimate + ATP = 3-phosphoshikimate + ADP + H(+). The protein operates within metabolic intermediate biosynthesis; chorismate biosynthesis; chorismate from D-erythrose 4-phosphate and phosphoenolpyruvate: step 5/7. Its function is as follows. Catalyzes the specific phosphorylation of the 3-hydroxyl group of shikimic acid using ATP as a cosubstrate. The protein is Shikimate kinase of Cupriavidus pinatubonensis (strain JMP 134 / LMG 1197) (Cupriavidus necator (strain JMP 134)).